The sequence spans 443 residues: MAAHRKHVFVEKVLQRLFPPVPSGQGKREPQTLAVQNPPKKVTSEKVSQKHAEPLTDTGSETPTARRLYTASGPPEGYVPCWPEPSSCGSPENASSGDDTEDQDPHDQPKRRRIRKHKSKKKFKNPNNVLIEQAELEKQQSLLQEKSQRQHTDGTTISKNKKRKLKKKQQIKRKKAAGLAAKAAGVSFMYQPEDSSNEGEGVGEACEEDGVDTSEEDPTLAGEEDVKDTREEDGADASEEDLTRARQEEGADASEEDPTPAGEEDVKDAREEDGVDTIEEDLTRAGEEDGKDTREEDGADASEEDPTWAGEEEGADSGEEDGADASEEDDTITNEKAHSILNFLKSTQEMYFYDGVSRDAASAALADAAEELLDRLASHSMLPSDVSILYHMKTLLLLQDTERLKHALEMFPEHCTMPPDHARVISAFFSYWITHILPEKSSD.

Lysine 12 bears the N6-acetyllysine mark. Residues 15–333 (QRLFPPVPSG…DASEEDDTIT (319 aa)) form a disordered region. The span at 42-54 (VTSEKVSQKHAEP) shows a compositional bias: basic and acidic residues. Polar residues predominate over residues 87-97 (SCGSPENASSG). Basic residues-rich tracts occupy residues 109 to 124 (PKRRRIRKHKSKKKFK) and 159 to 176 (KNKKRKLKKKQQIKRKKA). Positions 205–226 (ACEEDGVDTSEEDPTLAGEEDV) are enriched in acidic residues. 2 positions are modified to phosphoserine: serine 238 and serine 254. Residues 250 to 266 (GADASEEDPTPAGEEDV) are compositionally biased toward acidic residues. Threonine 277 bears the Phosphothreonine mark. Basic and acidic residues predominate over residues 281-296 (DLTRAGEEDGKDTREE). Residues 297–332 (DGADASEEDPTWAGEEEGADSGEEDGADASEEDDTI) show a composition bias toward acidic residues.

The protein is Glutamate-rich protein 1 (ERICH1) of Homo sapiens (Human).